We begin with the raw amino-acid sequence, 87 residues long: Non-structural protein NS3 (87 aa).

It localises to the host nucleus. In terms of biological role, plays a role in viral DNA replication. The sequence is that of Non-structural protein NS3 from Mustela (ADV).